The chain runs to 838 residues: Leucine--tRNA ligase 1 (838 aa).

Residues 40–51 (PYPSGAGLHVGH) carry the 'HIGH' region motif. A 'KMSKS' region motif is present at residues 608–612 (KMSKS). K611 contributes to the ATP binding site.

It belongs to the class-I aminoacyl-tRNA synthetase family.

It is found in the cytoplasm. It catalyses the reaction tRNA(Leu) + L-leucine + ATP = L-leucyl-tRNA(Leu) + AMP + diphosphate. This chain is Leucine--tRNA ligase 1, found in Rhizobium johnstonii (strain DSM 114642 / LMG 32736 / 3841) (Rhizobium leguminosarum bv. viciae).